Here is a 140-residue protein sequence, read N- to C-terminus: MPTINQLVRKGRYVEEYKSTAPALQKGMNTLRKKATDISAPQKRGVCTSVKTVTPKKPNSALRKVARVRLTNGIEVTAYIPGIGHNLQEHSVVLIRGGRVKDLPGVRYHIVRGALDTAGVANRQQSRSKYGAKKPKAAKK.

Aspartate 102 is modified (3-methylthioaspartic acid). Residues 121–140 (ANRQQSRSKYGAKKPKAAKK) form a disordered region. The span at 130 to 140 (YGAKKPKAAKK) shows a compositional bias: basic residues.

The protein belongs to the universal ribosomal protein uS12 family. In terms of assembly, part of the 30S ribosomal subunit. Contacts proteins S8 and S17. May interact with IF1 in the 30S initiation complex.

In terms of biological role, with S4 and S5 plays an important role in translational accuracy. Interacts with and stabilizes bases of the 16S rRNA that are involved in tRNA selection in the A site and with the mRNA backbone. Located at the interface of the 30S and 50S subunits, it traverses the body of the 30S subunit contacting proteins on the other side and probably holding the rRNA structure together. The combined cluster of proteins S8, S12 and S17 appears to hold together the shoulder and platform of the 30S subunit. This Alkaliphilus oremlandii (strain OhILAs) (Clostridium oremlandii (strain OhILAs)) protein is Small ribosomal subunit protein uS12.